A 413-amino-acid chain; its full sequence is ATP-dependent (S)-NAD(P)H-hydrate dehydratase (413 aa).

In terms of domain architecture, YjeF C-terminal spans asparagine 98 to glycine 402. (6S)-NADPHX-binding positions include glycine 199 and asparagine 252 to alanine 258. ATP-binding positions include lysine 292–aspartate 296 and glycine 311–glycine 320. Aspartate 321 is a binding site for (6S)-NADPHX.

It belongs to the NnrD/CARKD family. The cofactor is Mg(2+).

The catalysed reaction is (6S)-NADHX + ATP = ADP + phosphate + NADH + H(+). It carries out the reaction (6S)-NADPHX + ATP = ADP + phosphate + NADPH + H(+). In terms of biological role, catalyzes the dehydration of the S-form of NAD(P)HX at the expense of ATP, which is converted to ADP. Together with NAD(P)HX epimerase, which catalyzes the epimerization of the S- and R-forms, the enzyme allows the repair of both epimers of NAD(P)HX, a damaged form of NAD(P)H that is a result of enzymatic or heat-dependent hydration. This is ATP-dependent (S)-NAD(P)H-hydrate dehydratase from Heterostelium pallidum (strain ATCC 26659 / Pp 5 / PN500) (Cellular slime mold).